The sequence spans 166 residues: Phospholipase A2 inhibitor clone 08 (166 aa).

An N-terminal signal peptide occupies residues 1 to 19 (MRLILLSSLLLLGIFLANG). A C-type lectin domain is found at 46-161 (LKGAFLTVHR…CDDNLLVVCE (116 aa)). Intrachain disulfides connect C83–C160 and C138–C152. A glycan (N-linked (GlcNAc...) asparagine) is linked at N122.

This sequence belongs to the alpha-type phospholipase A2 inhibitor family. As to quaternary structure, homotrimer; non-covalently linked. As to expression, expressed by the liver.

Its subcellular location is the secreted. Functionally, this phospholipase A2 inhibitor binds directly phospholipase A2 in the presence or absence of calcium. The chain is Phospholipase A2 inhibitor clone 08 from Bothrops moojeni (Lance-headed viper).